Reading from the N-terminus, the 199-residue chain is Recombination protein RecR (199 aa).

Residues 58–73 (CKTCGNIDTQSPCTVC) form a C4-type zinc finger. Residues 81–176 (AMIVVVADVA…KVTRLAHGVP (96 aa)) form the Toprim domain.

The protein belongs to the RecR family.

Its function is as follows. May play a role in DNA repair. It seems to be involved in an RecBC-independent recombinational process of DNA repair. It may act with RecF and RecO. The protein is Recombination protein RecR of Bradyrhizobium sp. (strain BTAi1 / ATCC BAA-1182).